The primary structure comprises 126 residues: MSWQDYVDKQLMASRCVTKAAIAGHDGNVWAKSEGFEISKDEVAKIVAGFENESLLTSGGVTIAGTRYIYLSGTDHIIRAKLGKVGVHCMKTQQAVVISLYEEPIQPQQAASVVEKLGEYLITCGY.

The protein belongs to the profilin family. As to quaternary structure, occurs in many kinds of cells as a complex with monomeric actin in a 1:1 ratio.

It localises to the cytoplasm. Its subcellular location is the cytoskeleton. Its function is as follows. Binds to actin and affects the structure of the cytoskeleton. At high concentrations, profilin prevents the polymerization of actin, whereas it enhances it at low concentrations. By binding to PIP2, it inhibits the formation of IP3 and DG. The sequence is that of Profilin from Bombyx mori (Silk moth).